A 149-amino-acid chain; its full sequence is Transcriptional repressor NrdR (149 aa).

A zinc finger lies at 3-34 (CPFCSATDTKVIDSRLVAEGHQVRRRRECTEC). In terms of domain architecture, ATP-cone spans 49–139 (PRVIKRDGSR…VYRAFEDVSE (91 aa)).

The protein belongs to the NrdR family. Zn(2+) serves as cofactor.

In terms of biological role, negatively regulates transcription of bacterial ribonucleotide reductase nrd genes and operons by binding to NrdR-boxes. The sequence is that of Transcriptional repressor NrdR from Shewanella baltica (strain OS223).